Here is a 117-residue protein sequence, read N- to C-terminus: MAVYVKFEISQELEEKTAEVVANAEKIKKGANEVTKAVEKGIAKLVVIAQDVQPEEIVAHIPVICDEKGIAYSYSSTKEALGKAAGLEVPTSAIAVVAEGSADELKDLVEKLNGLKA.

The protein belongs to the eukaryotic ribosomal protein eL8 family. Part of the 50S ribosomal subunit. Part of the RNase P complex.

It is found in the cytoplasm. The catalysed reaction is Endonucleolytic cleavage of RNA, removing 5'-extranucleotides from tRNA precursor.. Functionally, multifunctional RNA-binding protein that recognizes the K-turn motif in ribosomal RNA, the RNA component of RNase P, box H/ACA, box C/D and box C'/D' sRNAs. Part of ribonuclease P, a protein complex that generates mature tRNA molecules by cleaving their 5'-ends, this subunit dramatically stimulates RNase P activity. The protein is Large ribosomal subunit protein eL8 of Methanococcus maripaludis (strain DSM 14266 / JCM 13030 / NBRC 101832 / S2 / LL).